Here is an 805-residue protein sequence, read N- to C-terminus: Ubiquitin carboxyl-terminal hydrolase 10 (805 aa).

Residues 139–170 (DGSGNADSDGTSGTGQRERKKKKKRPPGYYSY) are disordered. Residues 143–153 (NADSDGTSGTG) show a composition bias toward polar residues. The region spanning 422–802 (RGLINKGNWC…TAYLLYYRRV (381 aa)) is the USP domain. The active-site Nucleophile is the Cys431. Residues 561–593 (HINNGPDPVSEKEEINKDEQEGSDEEWEQVGPR) are disordered. A compositionally biased stretch (basic and acidic residues) spans 569–580 (VSEKEEINKDEQ). The Proton acceptor role is filled by His756.

This sequence belongs to the peptidase C19 family. USP10 subfamily.

The protein resides in the cytoplasm. The protein localises to the nucleus. The enzyme catalyses Thiol-dependent hydrolysis of ester, thioester, amide, peptide and isopeptide bonds formed by the C-terminal Gly of ubiquitin (a 76-residue protein attached to proteins as an intracellular targeting signal).. Hydrolase that can remove conjugated ubiquitin from target proteins such as p53/tp53, rps2/us5, rps3/us3, rps10/eS10, becn1, snx3 and cftr. Acts as an essential regulator of p53/tp53 stability: in unstressed cells, specifically deubiquitinates p53/tp53 in the cytoplasm, leading to counteracts MDM2 action and stabilize p53/tp53. Following DNA damage, translocates to the nucleus and deubiquitinates p53/tp53, leading to regulate the p53/TP53-dependent DNA damage response. Component of a regulatory loop that controls autophagy and p53/tp53 levels. Plays a key role in 40S ribosome subunit recycling when a ribosome has stalled during translation: acts both by inhibiting formation of stress granules, which store stalled translation pre-initiation complexes, and mediating deubiquitination of 40S ribosome subunits. Deubiquitinates cftr in early endosomes, enhancing its endocytic recycling. The protein is Ubiquitin carboxyl-terminal hydrolase 10 (usp10) of Xenopus tropicalis (Western clawed frog).